A 483-amino-acid chain; its full sequence is MFS-type transporter hepF (483 aa).

Residues 1–31 form a disordered region; sequence METPAGKADRPRDHDSEQSQDNVVSWEGEDD. Positions 7–17 are enriched in basic and acidic residues; sequence KADRPRDHDSE. Transmembrane regions (helical) follow at residues 89–109, 124–144, 147–167, 179–199, 206–226, 276–296, 311–331, 357–377, 385–405, 416–436, and 448–468; these read TIVV…AAPI, ILYT…MLIV, FFAG…VADL, FVTL…GFLT, WVFW…ILFT, PISL…YVLV, IGIS…GLWI, PMMI…GWSV, MPIV…MPMV, AASA…VLPL, and GWGN…LIAI.

It belongs to the major facilitator superfamily.

The protein resides in the cell membrane. Functionally, MFS-type transporter; part of the gene cluster that mediates the biosynthesis of heptelidic acid (HA), a sesquiterpene lactone that acts as an inhibitor of glyceraldehyde-3-phosphatedehydrogenase (GAPDH) and a growth inhibitor of the salt-tolerant lactic acid bacteria in soy sauce brewing. Might be required for efficient secretion of heptelidic acid. The protein is MFS-type transporter hepF (hepF) of Aspergillus oryzae (strain ATCC 42149 / RIB 40) (Yellow koji mold).